The chain runs to 293 residues: Ribosomal protein L11 methyltransferase (293 aa).

S-adenosyl-L-methionine is bound by residues T145, G166, D188, and N230.

It belongs to the methyltransferase superfamily. PrmA family.

The protein resides in the cytoplasm. The catalysed reaction is L-lysyl-[protein] + 3 S-adenosyl-L-methionine = N(6),N(6),N(6)-trimethyl-L-lysyl-[protein] + 3 S-adenosyl-L-homocysteine + 3 H(+). Methylates ribosomal protein L11. This is Ribosomal protein L11 methyltransferase from Escherichia coli O139:H28 (strain E24377A / ETEC).